Here is a 373-residue protein sequence, read N- to C-terminus: Lipoyl amidotransferase LIPT1, mitochondrial (373 aa).

The transit peptide at 1–25 (MLIPFSMKNCFQLLCNLKVPAAGFK) directs the protein to the mitochondrion. Positions 57–243 (LEGKPVLFLW…EYATSHQIDN (187 aa)) constitute a BPL/LPL catalytic domain. Residues Y107, R151, K161, T179, T208, and A210 each coordinate (R)-lipoyl-5'-AMP.

The protein belongs to the LplA family.

It is found in the mitochondrion. The enzyme catalyses N(6)-[(R)-lipoyl]-L-lysyl-[glycine-cleavage complex H protein] + L-lysyl-[lipoyl-carrier protein] = L-lysyl-[glycine-cleavage complex H protein] + N(6)-[(R)-lipoyl]-L-lysyl-[lipoyl-carrier protein]. The catalysed reaction is (R)-lipoyl-5'-AMP + L-lysyl-[lipoyl-carrier protein] = N(6)-[(R)-lipoyl]-L-lysyl-[lipoyl-carrier protein] + AMP + 2 H(+). It functions in the pathway protein modification; protein lipoylation via exogenous pathway; protein N(6)-(lipoyl)lysine from lipoate: step 2/2. Inhibited by lipoyl-AMP analogs including hexanoyl-, octanoyl- and decanoyl-AMP. In terms of biological role, lipoyl amidotransferase that catalyzes the transfer of lipoyl moieties from lipoyl-protein H of the glycine cleavage system (lipoyl-GCSH) to E2 subunits of the pyruvate dehydrogenase complex (PDCE2). Unable to catalyze the transfer of octanoyl from octanoyl-GCSH to PDCE2. In vitro, it is also able to catalyze the transfer of the lipoyl group from lipoyl-AMP to the specific lysine residue of lipoyl domains of lipoate-dependent enzymes but this reaction may not be physiologically relevant. This Bos taurus (Bovine) protein is Lipoyl amidotransferase LIPT1, mitochondrial (LIPT1).